A 296-amino-acid chain; its full sequence is MYLQLLKSLNRLHPRAWDFVQLSRMDRPIGIYLLLWPTLSAVWIAGNGSPTLANVLIFGLGVVLMRAAGCCINDFADRKVDGHVKRTADRPLASGRVRPREALTLFAILVGVSFLLVLCTNSRTVWLSFGAVALAFCYPFMKRYTYYPQVVLGAAYSWGIPMAFTAAGGELPAGAWLLYIANLLWTVGYDTYYAMVDRDDDLKIGVKSTAILFGDADRSIILTLQLLSLGCLLLAGSRFDLGGWFHLGLLGAAACFAWEYWSTRKLDRESCFKAFLHNHWAGMLVFIGVVLDYALR.

Helical transmembrane passes span 28–48 (PIGI…AGNG), 52–72 (LANV…GCCI), 102–122 (ALTL…CTNS), 145–167 (TYYP…FTAA), 174–196 (GAWL…YAMV), 219–239 (SIIL…GSRF), 241–261 (LGGW…WEYW), and 275–295 (FLHN…DYAL).

The protein belongs to the UbiA prenyltransferase family. Mg(2+) serves as cofactor.

It localises to the cell inner membrane. The enzyme catalyses all-trans-octaprenyl diphosphate + 4-hydroxybenzoate = 4-hydroxy-3-(all-trans-octaprenyl)benzoate + diphosphate. It functions in the pathway cofactor biosynthesis; ubiquinone biosynthesis. Its function is as follows. Catalyzes the prenylation of para-hydroxybenzoate (PHB) with an all-trans polyprenyl group. Mediates the second step in the final reaction sequence of ubiquinone-8 (UQ-8) biosynthesis, which is the condensation of the polyisoprenoid side chain with PHB, generating the first membrane-bound Q intermediate 3-octaprenyl-4-hydroxybenzoate. This chain is 4-hydroxybenzoate octaprenyltransferase, found in Pseudomonas putida (strain ATCC 700007 / DSM 6899 / JCM 31910 / BCRC 17059 / LMG 24140 / F1).